The following is a 151-amino-acid chain: Methylglyoxal synthase (151 aa).

Positions 1–151 constitute an MGS-like domain; sequence MKKTTRTMAA…DYQAYLAERT (151 aa). Substrate is bound by residues His19, Lys23, 45–48, and 65–66; these read TGTT and SG. The Proton donor/acceptor role is filled by Asp71. Substrate is bound at residue His98.

Belongs to the methylglyoxal synthase family.

It carries out the reaction dihydroxyacetone phosphate = methylglyoxal + phosphate. Functionally, catalyzes the formation of methylglyoxal from dihydroxyacetone phosphate. The polypeptide is Methylglyoxal synthase (Vibrio cholerae serotype O1 (strain ATCC 39541 / Classical Ogawa 395 / O395)).